Consider the following 81-residue polypeptide: Centromere protein X (81 aa).

Methionine 1 is subject to N-acetylmethionine.

It belongs to the CENP-X/MHF2 family. Heterodimer with CENPX, sometimes called MHF; this interaction stabilizes both partners. MHF heterodimers can assemble to form tetrameric structures. MHF also coassemble with CENPT-CENPW heterodimers at centromeres to form the tetrameric CENP-T-W-S-X complex. Forms a discrete complex with FANCM and CENPX, called FANCM-MHF; this interaction, probably mediated by direct binding between CENPS and FANCM, leads to synergistic activation of double-stranded DNA binding and strongly stimulates FANCM-mediated DNA remodeling. Recruited by FANCM to the Fanconi anemia (FA) core complex, which consists of CENPS, CENPX, FANCA, FANCB, FANCC, FANCE, FANCF, FANCG, FANCL, FANCM, FAAP24 and FAAP100. The FA core complex associates with Bloom syndrome (BLM) complex, which consists of at least BLM, DNA topoisomerase 3-alpha (TOP3A), RMI1/BLAP75, RPA1/RPA70 and RPA2/RPA32. The super complex between FA and BLM is called BRAFT.

It localises to the nucleus. The protein resides in the chromosome. It is found in the centromere. The protein localises to the kinetochore. Functionally, DNA-binding component of the Fanconi anemia (FA) core complex. Required for the normal activation of the FA pathway, leading to monoubiquitination of the FANCI-FANCD2 complex in response to DNA damage, cellular resistance to DNA cross-linking drugs, and prevention of chromosomal breakage. In complex with CENPS (MHF heterodimer), crucial cofactor for FANCM in both binding and ATP-dependent remodeling of DNA. Stabilizes FANCM. In complex with CENPS and FANCM (but not other FANC proteins), rapidly recruited to blocked forks and promotes gene conversion at blocked replication forks. In complex with CENPS, CENPT and CENPW (CENP-T-W-S-X heterotetramer), involved in the formation of a functional kinetochore outer plate, which is essential for kinetochore-microtubule attachment and faithful mitotic progression. As a component of MHF and CENP-T-W-S-X complexes, binds DNA and bends it to form a nucleosome-like structure. DNA-binding function is fulfilled in the presence of CENPS, with the following preference for DNA substates: Holliday junction &gt; double-stranded &gt; splay arm &gt; single-stranded. Does not bind DNA on its own. In Pongo abelii (Sumatran orangutan), this protein is Centromere protein X (CENPX).